The chain runs to 976 residues: Vacuolar membrane protease (976 aa).

At 1–15 (MKLKSVFRSVLKYRK) the chain is on the cytoplasmic side. A helical membrane pass occupies residues 16-36 (TNLSLLLLITYSIITLLYIFD). Residues 37 to 359 (HERYKLNLPK…KFFVISAKTL (323 aa)) are Vacuolar-facing. N-linked (GlcNAc...) asparagine glycans are attached at residues Asn-96 and Asn-121. Residues His-156 and Asp-168 each contribute to the Zn(2+) site. A glycan (N-linked (GlcNAc...) asparagine) is linked at Asn-189. Catalysis depends on Glu-200, which acts as the Proton acceptor. Glu-201 is a binding site for Zn(2+). 2 N-linked (GlcNAc...) asparagine glycosylation sites follow: Asn-212 and Asn-217. The Zn(2+) site is built by Glu-226 and His-300. Residues 360–380 (FYWNCIFLLVSPVVAIGLYLI) traverse the membrane as a helical segment. Over 381 to 392 (SRDRMTWKSHSW) the chain is Cytoplasmic. A helical transmembrane segment spans residues 393–412 (LSWTRFPLSLAAGIIVQKLF). The Vacuolar segment spans residues 413–428 (SNDIIRSNPLTFSRNY). Residues 429-449 (FWPISAFFTQVIFTSYVLINC) traverse the membrane as a helical segment. Residues 450-461 (SNFFFPCADMKS) are Cytoplasmic-facing. Residues 462–482 (LSIIELFIILWTILLFTSKLL) form a helical membrane-spanning segment. At 483–496 (YSSDYRYTGLYPLS) the chain is on the vacuolar side. A helical membrane pass occupies residues 497 to 517 (IFFLLSTIAAILRLLALALGM). At 518 to 627 (RTRKRLGREC…NSLKLEYTDY (110 aa)) the chain is on the cytoplasmic side. Residues 528–610 (RDHHSNYSSH…PLLKGSNSME (83 aa)) form a disordered region. Residues 549-558 (NLEQPQDQFT) show a composition bias toward polar residues. Residues 559–570 (SSQDDQASIQDD) show a composition bias toward low complexity. Positions 582–601 (NVDEDHGMDSSSQQHDERVP) are enriched in basic and acidic residues. Residues 628-648 (AWIIQFLLIVPIPSFILFNSV) traverse the membrane as a helical segment. The Vacuolar segment spans residues 649 to 668 (DVIMDALNHTVQEGSKATFD). The N-linked (GlcNAc...) asparagine glycan is linked to Asn-656. The helical transmembrane segment at 669–689 (VLRFGMVGSILMALPILPFFY) threads the bilayer. The Cytoplasmic portion of the chain corresponds to 690 to 692 (KVN). A helical transmembrane segment spans residues 693–713 (YITISLTALLFLISASKTLLV). Residues 714-976 (HPFTNSNPLK…LVIVKDAIIL (263 aa)) lie on the Vacuolar side of the membrane. N-linked (GlcNAc...) asparagine glycosylation is found at Asn-768, Asn-796, Asn-811, Asn-866, and Asn-937.

This sequence belongs to the peptidase M28 family. Requires Zn(2+) as cofactor.

Its subcellular location is the vacuole membrane. Functionally, may be involved in vacuolar sorting and osmoregulation. The chain is Vacuolar membrane protease from Saccharomyces cerevisiae (strain Lalvin EC1118 / Prise de mousse) (Baker's yeast).